We begin with the raw amino-acid sequence, 372 residues long: Aminomethyltransferase (372 aa).

It belongs to the GcvT family. The glycine cleavage system is composed of four proteins: P, T, L and H.

The catalysed reaction is N(6)-[(R)-S(8)-aminomethyldihydrolipoyl]-L-lysyl-[protein] + (6S)-5,6,7,8-tetrahydrofolate = N(6)-[(R)-dihydrolipoyl]-L-lysyl-[protein] + (6R)-5,10-methylene-5,6,7,8-tetrahydrofolate + NH4(+). Its function is as follows. The glycine cleavage system catalyzes the degradation of glycine. The protein is Aminomethyltransferase of Rubrobacter xylanophilus (strain DSM 9941 / JCM 11954 / NBRC 16129 / PRD-1).